Reading from the N-terminus, the 352-residue chain is MSNTTSALPSSVPAVSLDPNATLCQDWEQSHHLLFHLANLSLGLGFLIPTTLALHMIFLRLLLMTGCSLFIAWATLYRCTLDVMVWNVVFLLVNFMHFFFLLYKRRPIKIDRELKSVYKRMFEPLHVREALFQRLTGQFCTIQTLKKGQVYAAEDKTSVDERLSILLKGKMKVSYRGHFLHNIYTNAFIDSPEFRSTQMNRGERFQVTIAAEENCKLLCWSRERLTYFLESESFLNEVFRYLIGKDITNKLYSLNDPTLSDKAVKKMDRQPSLCSQLSMMQMRNSMASTSDTDDVLNQILRGGSTGSSLQKNPLTKTSTTMKPIEEGLEDDVFESESPTTSQNVSKTTKKDI.

Residues 1-38 (MSNTTSALPSSVPAVSLDPNATLCQDWEQSHHLLFHLA) lie on the Extracellular side of the membrane. N-linked (GlcNAc...) asparagine glycosylation is found at asparagine 3 and asparagine 20. Residues 39–59 (NLSLGLGFLIPTTLALHMIFL) form a helical membrane-spanning segment. Position 60 (arginine 60) is a topological domain, cytoplasmic. Residues 61-81 (LLLMTGCSLFIAWATLYRCTL) traverse the membrane as a helical segment. Position 82 (aspartate 82) is a topological domain, extracellular. A helical membrane pass occupies residues 83 to 103 (VMVWNVVFLLVNFMHFFFLLY). The Cytoplasmic segment spans residues 104-352 (KRRPIKIDRE…NVSKTTKKDI (249 aa)). A disordered region spans residues 299-352 (ILRGGSTGSSLQKNPLTKTSTTMKPIEEGLEDDVFESESPTTSQNVSKTTKKDI). 2 stretches are compositionally biased toward polar residues: residues 306–321 (GSSLQKNPLTKTSTTM) and 336–346 (ESPTTSQNVSK).

This sequence belongs to the popeye family. As to expression, expressed in skeletal muscle (at protein level).

The protein resides in the lateral cell membrane. It localises to the cell junction. The protein localises to the tight junction. It is found in the membrane. Its subcellular location is the cell membrane. The protein resides in the sarcolemma. It localises to the caveola. Its function is as follows. Cell adhesion molecule involved in the establishment and/or maintenance of cell integrity. Involved in skeletal muscle and heart development as well as in the maintenance of heart function. May play a role in vamp3-mediated vesicular transport and recycling of receptor molecules. Involved in the formation and regulation of the tight junction (TJ) paracellular permeability barrier in epithelial cells. May induce primordial adhesive contact and aggregation of epithelial cells in a Ca(2+)-independent manner. May be involved in epithelial movement during corneal sheet formation and regeneration. May play a role in the regulation of cell shape and movement by modulating the Rho-GTPase activity. May also be involved in striated muscle regeneration and in the regulation of cell spreading. The sequence is that of Popeye domain-containing protein 1 (popdc1) from Danio rerio (Zebrafish).